A 194-amino-acid chain; its full sequence is Probable GTP-binding protein EngB (194 aa).

Residues 22-194 form the EngB-type G domain; sequence LFLEVAFAGR…WQELDTMLNP (173 aa). Residues 30–37, 57–61, 75–78, 142–145, and 173–175 contribute to the GTP site; these read GRSNVGKS, GCTQL, DLPG, TKAD, and FSS. Mg(2+) contacts are provided by serine 37 and threonine 59.

The protein belongs to the TRAFAC class TrmE-Era-EngA-EngB-Septin-like GTPase superfamily. EngB GTPase family. Mg(2+) is required as a cofactor.

Its function is as follows. Necessary for normal cell division and for the maintenance of normal septation. In Desulforapulum autotrophicum (strain ATCC 43914 / DSM 3382 / VKM B-1955 / HRM2) (Desulfobacterium autotrophicum), this protein is Probable GTP-binding protein EngB.